A 407-amino-acid chain; its full sequence is Phosphopentomutase (407 aa).

6 residues coordinate Mn(2+): D10, D306, H311, D347, H348, and H359.

It belongs to the phosphopentomutase family. Mn(2+) serves as cofactor.

Its subcellular location is the cytoplasm. It catalyses the reaction 2-deoxy-alpha-D-ribose 1-phosphate = 2-deoxy-D-ribose 5-phosphate. The catalysed reaction is alpha-D-ribose 1-phosphate = D-ribose 5-phosphate. It participates in carbohydrate degradation; 2-deoxy-D-ribose 1-phosphate degradation; D-glyceraldehyde 3-phosphate and acetaldehyde from 2-deoxy-alpha-D-ribose 1-phosphate: step 1/2. Its function is as follows. Isomerase that catalyzes the conversion of deoxy-ribose 1-phosphate (dRib-1-P) and ribose 1-phosphate (Rib-1-P) to deoxy-ribose 5-phosphate (dRib-5-P) and ribose 5-phosphate (Rib-5-P), respectively. The sequence is that of Phosphopentomutase from Shigella dysenteriae serotype 1 (strain Sd197).